A 218-amino-acid chain; its full sequence is Peptide methionine sulfoxide reductase A2 (218 aa).

Residues 1–19 (MDSSLKTQEPQVVETSPSP) are compositionally biased toward polar residues. The segment at 1 to 30 (MDSSLKTQEPQVVETSPSPVAQEPPQVADK) is disordered. Ser205 carries the post-translational modification Phosphoserine.

Belongs to the MsrA Met sulfoxide reductase family.

The protein localises to the cytoplasm. It localises to the cytosol. The enzyme catalyses L-methionyl-[protein] + [thioredoxin]-disulfide + H2O = L-methionyl-(S)-S-oxide-[protein] + [thioredoxin]-dithiol. It carries out the reaction [thioredoxin]-disulfide + L-methionine + H2O = L-methionine (S)-S-oxide + [thioredoxin]-dithiol. With respect to regulation, activated during dark in short day conditions. Functionally, catalyzes the reduction of methionine sulfoxide (MetSO) to methionine in proteins. Plays a protective role against oxidative stress by restoring activity to proteins that have been inactivated by methionine oxidation. Prevents cellular oxidative damage in long nights. MSRA family specifically reduces the MetSO S-enantiomer. The protein is Peptide methionine sulfoxide reductase A2 (MRSA2) of Arabidopsis thaliana (Mouse-ear cress).